A 216-amino-acid polypeptide reads, in one-letter code: MKQDSRFPNLFITDHPLIQHKLTHMRDKDTSTRTFRELLREITLLMGYEITRNLPITTKRVETPLVAVDAPVIAGKKLAIVPVLRAGIGMSDGLLDLVPSARVGHIGVYRAEDHRPVEYLVRLPDLEDRIFILCDPMVATGYSAVHAVDVLKRRNVPAANITFVALVAAPEGVQVFQDAHPDVKLFVASLDSHLNEHAYIVPGLGDAGDRLFGTKN.

5-phospho-alpha-D-ribose 1-diphosphate contacts are provided by residues R85, R110, and 135 to 143; that span reads DPMVATGYS. Residues I200 and 205 to 207 contribute to the uracil site; that span reads GDA. D206 contacts 5-phospho-alpha-D-ribose 1-diphosphate.

The protein belongs to the UPRTase family. Requires Mg(2+) as cofactor.

The catalysed reaction is UMP + diphosphate = 5-phospho-alpha-D-ribose 1-diphosphate + uracil. Its pathway is pyrimidine metabolism; UMP biosynthesis via salvage pathway; UMP from uracil: step 1/1. Its activity is regulated as follows. Allosterically activated by GTP. In terms of biological role, catalyzes the conversion of uracil and 5-phospho-alpha-D-ribose 1-diphosphate (PRPP) to UMP and diphosphate. This Burkholderia ambifaria (strain ATCC BAA-244 / DSM 16087 / CCUG 44356 / LMG 19182 / AMMD) (Burkholderia cepacia (strain AMMD)) protein is Uracil phosphoribosyltransferase.